The chain runs to 127 residues: Small ribosomal subunit protein uS12m (127 aa).

This sequence belongs to the universal ribosomal protein uS12 family.

Its subcellular location is the mitochondrion. Its function is as follows. Protein S12 is involved in the translation initiation step. The polypeptide is Small ribosomal subunit protein uS12m (RPS12) (Chondrus crispus (Carrageen Irish moss)).